Reading from the N-terminus, the 239-residue chain is SKA complex subunit 1 (239 aa).

The segment at 87 to 115 (PDSVPQKSTRPCLDDEKEGSSVVQPPESG) is disordered. The interval 116 to 239 (NRHVQLISEQ…RCGPLTFYYA (124 aa)) is microtubule binding.

This sequence belongs to the SKA1 family. In terms of assembly, component of the SKA complex, composed of two copies of ska-1 and a single copy of ska-3. The core complex associates with microtubules and may form dimeric assemblies. Interacts with ska-3 and microtubules.

The protein localises to the cytoplasm. It is found in the cytoskeleton. It localises to the spindle. The protein resides in the chromosome. Its subcellular location is the centromere. The protein localises to the kinetochore. Its function is as follows. Component of the SKA complex, a microtubule plus end-binding complex of the outer kinetochore that stabilizes spindle microtubule-kinetochore attachments, promotes alignment of chromosomes at the mitotic spindle equator (chromosome congression) and assists suppression of the spindle assembly checkpoint. Kinetochores, consisting of a centromere-associated inner segment and a microtubule-contacting outer segment, play a crucial role in chromosome segregation by mediating the physical connection between centromeric DNA and spindle microtubules. The outer kinetochore is made up of the ten-subunit KMN network complex, comprising the MIS12, NDC80 and KNL1 complexes, and auxiliary microtubule-associated components such as the SKA complex; together they connect the outer kinetochore with the inner kinetochore, bind microtubules, and mediate interactions with mitotic checkpoint proteins that delay anaphase until chromosomes are bioriented on the spindle. The SKA complex is loaded onto bioriented kinetochores and it facilitates chromosome congression by stabilizing microtubules and end-on attachment of the NDC80 complex to depolymerizing spindle microtubules, thereby assisting the poleward-moving kinetochore in withstanding microtubule pulling forces. The complex associates with dynamic microtubule plus-ends and can track both depolymerizing and elongating microtubules. The complex recruits protein phosphatase 1 (PP1) to the kinetochore in prometaphase and metaphase, to oppose spindle assembly checkpoint signaling and promote the onset of anaphase. In the complex, it mediates interactions with microtubules. During meiosis the SKA complex stabilizes the meiotic spindle and is required for its migration to the cortex. The chain is SKA complex subunit 1 from Caenorhabditis briggsae.